Reading from the N-terminus, the 292-residue chain is MITGSLVAIVTPMHEDGSLDYPRLRSLIDFHVAEGTDGIVVVGTTGESPTVNVEEHCELIRTTVEHAAGRIPVIAGAGGNSTAEAIELASFAQEAGAVAQLSVVPYYNRPTQEGLYRHFRSIAEAVELPLILYNVPGRTVADLSNDTTLRLAEIPNIIGIKDATGSIDRACDLIERAPKDFALYTGDDMSAAAFILLGGHGTISVTANVAPRAMHEMCAAALAGEALRVREINGRLVGLHRDLFCEANPIPVKWAVARMGLIESGIRLPLTPLSSASQERVLLAMRRAGVNV.

Thr45 is a binding site for pyruvate. The Proton donor/acceptor role is filled by Tyr133. The Schiff-base intermediate with substrate role is filled by Lys161. Ile203 is a binding site for pyruvate.

The protein belongs to the DapA family. In terms of assembly, homotetramer; dimer of dimers.

Its subcellular location is the cytoplasm. It catalyses the reaction L-aspartate 4-semialdehyde + pyruvate = (2S,4S)-4-hydroxy-2,3,4,5-tetrahydrodipicolinate + H2O + H(+). It participates in amino-acid biosynthesis; L-lysine biosynthesis via DAP pathway; (S)-tetrahydrodipicolinate from L-aspartate: step 3/4. Catalyzes the condensation of (S)-aspartate-beta-semialdehyde [(S)-ASA] and pyruvate to 4-hydroxy-tetrahydrodipicolinate (HTPA). This chain is 4-hydroxy-tetrahydrodipicolinate synthase, found in Aromatoleum aromaticum (strain DSM 19018 / LMG 30748 / EbN1) (Azoarcus sp. (strain EbN1)).